Reading from the N-terminus, the 55-residue chain is Accessory gland-specific peptide 70A (55 aa).

Positions 1-19 are cleaved as a signal peptide; the sequence is MKTLALFLVLVCVLGLVQS. Residues 20-33 form an essential for binding to sperm region; it reads WEWPWNRKPTKFPI. A hydroxyproline mark is found at proline 28 and proline 32. Isoleucine 33 is modified (isoleucine derivative). A hydroxyproline mark is found at proline 34, proline 36, and proline 38. Residues 36–55 are sufficient to induce PMR; sequence PNPRDKWCRLNLGPAWGGRC. Cysteine 43 and cysteine 55 form a disulfide bridge.

It belongs to the Drosophila sex peptide family. In terms of processing, sperm-bound protein is cleaved to release an active C-terminal peptide. Gradual release from stored sperm may function to prolong PMR and enhance male reproductive success. As to expression, main cells of the accessory glands of males (paragonial gland).

Its subcellular location is the secreted. Functionally, male seminal protein which triggers short- and long-term post-mating behavioral responses (PMR) in female Drosophila. Binds initially to sperm where it is later cleaved to release an active peptide within the female reproductive tract. Signals via the sex peptide receptor (SPR) in female flies; may also act via other receptors. Moderates the activity of distinct neuronal circuitries in the female genital tract to promote specific PMRs including: enhanced ovulation, increased egg laying rate, increased feeding/foraging rate, induced antimicrobial peptide synthesis, reduced mating receptivity, reduced day-time sleep and reduced lifespan in multiple mated females. The polypeptide is Accessory gland-specific peptide 70A (SP) (Drosophila melanogaster (Fruit fly)).